The sequence spans 2614 residues: Talin-B (2614 aa).

The region spanning 85 to 369 (RPLKVRLMDE…GYIEILMKKR (285 aa)) is the FERM domain. Residues 393–421 (RGQTSQATTSSSLSGYDGNGGREGQYSAP) form a disordered region. Low complexity predominate over residues 395 to 406 (QTSQATTSSSLS). Coiled coils occupy residues 1938-1965 (TQNI…ASGK) and 2033-2057 (NKAI…LVQS). The region spanning 2219-2460 (LLFAAGESLE…SIRKKEYSDQ (242 aa)) is the I/LWEQ domain. A disordered region spans residues 2454–2557 (KKEYSDQTGN…AAPTAAAPNK (104 aa)). The span at 2473–2487 (KPTTSISVGITPTKR) shows a compositional bias: polar residues. The span at 2517 to 2537 (KKPAPSQAPSSPVAPVSAPVS) shows a compositional bias: low complexity. The span at 2538–2548 (KPSPKPAPKPA) shows a compositional bias: pro residues. Residues 2553 to 2614 (AAPNKTYTLE…NNIKTKLGLF (62 aa)) enclose the HP domain.

Its subcellular location is the cytoplasm. The protein resides in the cytoskeleton. The protein localises to the cell cortex. In terms of biological role, actin-binding protein required for multicellular morphogenesis. Substrate of pkgB and/or pkbA. This Dictyostelium discoideum (Social amoeba) protein is Talin-B (talB).